A 105-amino-acid chain; its full sequence is Cuticle protein AMP4 (105 aa).

A disordered region spans residues 1–21 (DRDAQTLTDERNDQGDGNFRY). Residues 16–81 (DGNFRYEFET…PSSDLLPVGP (66 aa)) enclose the Chitin-binding type R&amp;R domain.

As to expression, arthrodial membrane.

This is Cuticle protein AMP4 from Homarus americanus (American lobster).